A 76-amino-acid chain; its full sequence is uORF2 protein (76 aa).

In terms of biological role, plays a role in viral replication. The chain is uORF2 protein from Homo sapiens (Human).